The sequence spans 440 residues: Xylose isomerase (440 aa).

Active-site residues include histidine 101 and aspartate 104. The Mg(2+) site is built by glutamate 232, glutamate 268, histidine 271, aspartate 296, aspartate 307, aspartate 309, and aspartate 339.

This sequence belongs to the xylose isomerase family. In terms of assembly, homotetramer. It depends on Mg(2+) as a cofactor.

The protein resides in the cytoplasm. The catalysed reaction is alpha-D-xylose = alpha-D-xylulofuranose. In Escherichia coli O157:H7, this protein is Xylose isomerase.